The sequence spans 756 residues: Cellulose synthase catalytic subunit [UDP-forming] (756 aa).

The next 4 helical transmembrane spans lie at 27–47 (ASYI…TVTL), 49–69 (NNEQ…VGRG), 106–126 (GILG…LFLS), and 167–187 (LTVL…VYIL). The segment at 147 to 242 (DWPTVDIFIP…YILILDCDHI (96 aa)) is catalytic subdomain A. Aspartate 189 is a catalytic residue. Residues aspartate 238 and aspartate 240 each coordinate substrate. The interval 319–379 (EAIESIGGFA…GQRMRWARGM (61 aa)) is catalytic subdomain B. Aspartate 335 is an active-site residue. The next 5 helical transmembrane spans lie at 409-429 (FFFA…LFAG), 432-452 (IIAA…FHSI), 470-490 (VYET…LLFP), 517-537 (NIIF…ELIV), and 551-571 (LLNC…IAVG). Positions 576–681 (QVRYNHRVEA…ERDIVRFVFG (106 aa)) constitute a PilZ domain. Residues 721–756 (NSRPKKKPLALPVERREPTTIHSGQTQEGKISRAAS) are disordered. Over residues 740-756 (TIHSGQTQEGKISRAAS) the composition is skewed to polar residues.

It belongs to the glycosyltransferase 2 family. Mg(2+) is required as a cofactor.

The protein resides in the cell inner membrane. The catalysed reaction is [(1-&gt;4)-beta-D-glucosyl](n) + UDP-alpha-D-glucose = [(1-&gt;4)-beta-D-glucosyl](n+1) + UDP + H(+). The protein operates within glycan metabolism; bacterial cellulose biosynthesis. With respect to regulation, activated by bis-(3'-5') cyclic diguanylic acid (c-di-GMP). Functionally, catalytic subunit of cellulose synthase. It polymerizes uridine 5'-diphosphate glucose to cellulose. The thick cellulosic mats generated by this enzyme probably provide a specialized protective environment to the bacterium. This is Cellulose synthase catalytic subunit [UDP-forming] (bcsA) from Komagataeibacter sucrofermentans (strain ATCC 700178 / DSM 15973 / CECT 7291 / JCM 9730 / LMG 18788 / BPR 2001) (Acetobacter xylinus subsp. sucrofermentans).